The sequence spans 198 residues: Snake venom metalloproteinase BpirMP (198 aa).

Residues 1 to 197 form the Peptidase M12B domain; sequence TYIEVAVVAD…HNPQCILNEP (197 aa). E4 and D88 together coordinate Ca(2+). 3 disulfides stabilise this stretch: C112/C192, C152/C176, and C154/C159. H137 is a binding site for Zn(2+). Residue E138 is part of the active site. Zn(2+) contacts are provided by H141 and H147. 2 residues coordinate Ca(2+): C192 and N195.

This sequence belongs to the venom metalloproteinase (M12B) family. P-I subfamily. In terms of assembly, monomer. It depends on Zn(2+) as a cofactor. In terms of tissue distribution, expressed by the venom gland.

Its subcellular location is the secreted. With respect to regulation, inhibited by the chelating agents EDTA, EGTA and 1,10-phenanthroline. Is not inhibited by serine proteinase inhibitors aprotinin, leupeptin and benzamidine. Zinc metalloprotease that preferentially degrades Aalpha chain of fibrinogen (FGA) (at a dose of 5 ug, whereas at a dose of 10 ug, both FGA and FGB are completely degraded). Degrades fibrin gel in a dose-dependent manner, as well blood clots formed in vitro (thrombolytic activity). Induces hemorrhage (in the dorsal skin of mice), with an MHD of 50 ug. The basal membrane components collagen (all chains of type IV) (COL4A4), fibronectin (FN1), laminin and nidogen are all degraded by this toxin. The polypeptide is Snake venom metalloproteinase BpirMP (Bothrops pirajai (Piraja's lancehead)).